Here is an 870-residue protein sequence, read N- to C-terminus: DNA topoisomerase 1 (870 aa).

A Toprim domain is found at 1 to 128 (MKSPRFRHSQ…RVYKSSFEAA (128 aa)). One can recognise a Topo IA-type catalytic domain in the interval 143–578 (YDGLAYSAKA…QTNAFVQKIT (436 aa)). The interval 180–185 (SSGRVQ) is interaction with DNA. Residue tyrosine 299 is the O-(5'-phospho-DNA)-tyrosine intermediate of the active site. C4-type zinc fingers lie at residues 603 to 627 (CQCP…HPNC), 693 to 717 (CPKC…QNGC), and 784 to 807 (CPLC…KRGC).

This sequence belongs to the type IA topoisomerase family. In terms of assembly, monomer.

It catalyses the reaction ATP-independent breakage of single-stranded DNA, followed by passage and rejoining.. Its function is as follows. Releases the supercoiling and torsional tension of DNA, which is introduced during the DNA replication and transcription, by transiently cleaving and rejoining one strand of the DNA duplex. Introduces a single-strand break via transesterification at a target site in duplex DNA. The scissile phosphodiester is attacked by the catalytic tyrosine of the enzyme, resulting in the formation of a DNA-(5'-phosphotyrosyl)-enzyme intermediate and the expulsion of a 3'-OH DNA strand. The free DNA strand then undergoes passage around the unbroken strand, thus removing DNA supercoils. Finally, in the religation step, the DNA 3'-OH attacks the covalent intermediate to expel the active-site tyrosine and restore the DNA phosphodiester backbone. The chain is DNA topoisomerase 1 (topX) from Bacillus anthracis.